The primary structure comprises 248 residues: Granulin (248 aa).

Belongs to the polyhedrin family.

In terms of biological role, component of the virus occlusion bodies, which are large proteinaceous structures, that protect the virus from the outside environment for extended periods until they are ingested by insect larvae. The protein is Granulin of Zygaenidae (burnets).